The primary structure comprises 167 residues: Leptin (167 aa).

An N-terminal signal peptide occupies residues 1 to 21 (MYWRTLWGFLWLWPYLFYIQA). A disulfide bridge connects residues C117 and C167.

Belongs to the leptin family.

Its subcellular location is the secreted. In terms of biological role, key player in the regulation of energy balance and body weight control. Once released into the circulation, has central and peripheral effects by binding LEPR, found in many tissues, which results in the activation of several major signaling pathways. In the hypothalamus, acts as an appetite-regulating factor that induces a decrease in food intake and an increase in energy consumption by inducing anorexinogenic factors and suppressing orexigenic neuropeptides, also regulates bone mass and secretion of hypothalamo-pituitary-adrenal hormones. In the periphery, increases basal metabolism, influences reproductive function, regulates pancreatic beta-cell function and insulin secretion, is pro-angiogenic for endothelial cell and affects innate and adaptive immunity. In the arcuate nucleus of the hypothalamus, activates by depolarization POMC neurons inducing FOS and SOCS3 expression to release anorexigenic peptides and inhibits by hyperpolarization NPY neurons inducing SOCS3 with a consequent reduction on release of orexigenic peptides. In addition to its known satiety inducing effect, has a modulatory role in nutrient absorption. In the intestine, reduces glucose absorption by enterocytes by activating PKC and leading to a sequential activation of p38, PI3K and ERK signaling pathways which exerts an inhibitory effect on glucose absorption. Acts as a growth factor on certain tissues, through the activation of different signaling pathways increases expression of genes involved in cell cycle regulation such as CCND1, via JAK2-STAT3 pathway, or VEGFA, via MAPK1/3 and PI3K-AKT1 pathways. May also play an apoptotic role via JAK2-STAT3 pathway and up-regulation of BIRC5 expression. Pro-angiogenic, has mitogenic activity on vascular endothelial cells and plays a role in matrix remodeling by regulating the expression of matrix metalloproteinases (MMPs) and tissue inhibitors of metalloproteinases (TIMPs). In innate immunity, modulates the activity and function of neutrophils by increasing chemotaxis and the secretion of oxygen radicals. Increases phagocytosis by macrophages and enhances secretion of pro-inflammatory mediators. Increases cytotoxic ability of NK cells. Plays a pro-inflammatory role, in synergy with IL1B, by inducing NOS2 which promotes the production of IL6, IL8 and Prostaglandin E2, through a signaling pathway that involves JAK2, PI3K, MAP2K1/MEK1 and MAPK14/p38. In adaptive immunity, promotes the switch of memory T-cells towards T helper-1 cell immune responses. Increases CD4(+)CD25(-) T-cell proliferation and reduces autophagy during TCR (T-cell receptor) stimulation, through MTOR signaling pathway activation and BCL2 up-regulation. The protein is Leptin (LEP) of Macaca mulatta (Rhesus macaque).